Reading from the N-terminus, the 272-residue chain is Acyl-[acyl-carrier-protein]--UDP-N-acetylglucosamine O-acyltransferase (272 aa).

This sequence belongs to the transferase hexapeptide repeat family. LpxA subfamily. As to quaternary structure, homotrimer.

The protein localises to the cytoplasm. The catalysed reaction is a (3R)-hydroxyacyl-[ACP] + UDP-N-acetyl-alpha-D-glucosamine = a UDP-3-O-[(3R)-3-hydroxyacyl]-N-acetyl-alpha-D-glucosamine + holo-[ACP]. It participates in glycolipid biosynthesis; lipid IV(A) biosynthesis; lipid IV(A) from (3R)-3-hydroxytetradecanoyl-[acyl-carrier-protein] and UDP-N-acetyl-alpha-D-glucosamine: step 1/6. Functionally, involved in the biosynthesis of lipid A, a phosphorylated glycolipid that anchors the lipopolysaccharide to the outer membrane of the cell. In Rhizobium etli (strain ATCC 51251 / DSM 11541 / JCM 21823 / NBRC 15573 / CFN 42), this protein is Acyl-[acyl-carrier-protein]--UDP-N-acetylglucosamine O-acyltransferase.